The sequence spans 648 residues: Leucine aminopeptidase 2 (648 aa).

A peptide-binding positions include 143–145 (QCQ) and 269–274 (PYGGME). A Zn(2+)-binding site is contributed by H298. E299 (proton acceptor) is an active-site residue. Residues H302 and E321 each contribute to the Zn(2+) site. Y408 functions as the Proton donor in the catalytic mechanism.

It belongs to the peptidase M1 family. Zn(2+) serves as cofactor.

The protein resides in the cytoplasm. Its subcellular location is the nucleus. It carries out the reaction an epoxide + H2O = an ethanediol. Its function is as follows. Aminopeptidase that preferentially cleaves di- and tripeptides. Also has low epoxide hydrolase activity (in vitro). Can hydrolyze the epoxide leukotriene LTA(4) but it forms preferentially 5,6-dihydroxy-7,9,11,14-eicosatetraenoic acid rather than the cytokine leukotriene B(4) as the product compared to the homologous mammalian enzyme (in vitro). The sequence is that of Leucine aminopeptidase 2 from Lodderomyces elongisporus (strain ATCC 11503 / CBS 2605 / JCM 1781 / NBRC 1676 / NRRL YB-4239) (Yeast).